The sequence spans 187 residues: MNLQDHFLIAMPHLEDENFQRSVVYICENNEQGSMGLVLTQATDLSIAELCAKMNFMMADEREYSDKLVLLGGPVNLEHGFILHKKTAQEFQHSYKVTDQIYLTTSADIINTFGTAQSPEKYLVTLGCARWEPNQLENEIANNDWLVVPADEDILFDVDISERWFAANQLLGIEHVNFSYQQQMEHS.

The protein belongs to the UPF0301 (AlgH) family.

The polypeptide is UPF0301 protein HS_0009 (Histophilus somni (strain 129Pt) (Haemophilus somnus)).